Reading from the N-terminus, the 1473-residue chain is Sulfite reductase [NADPH] subunit beta (1473 aa).

In terms of domain architecture, Flavodoxin-like spans 728-876; sequence LTILFASDGG…AYNLWEPELW (149 aa). Residues Cys-1328, Cys-1334, Cys-1373, and Cys-1377 each coordinate [4Fe-4S] cluster. A siroheme-binding site is contributed by Cys-1377.

The protein belongs to the nitrite and sulfite reductase 4Fe-4S domain family. As to quaternary structure, alpha(2)-beta(2). The alpha component is a flavoprotein, the beta component is a hemoprotein. It depends on siroheme as a cofactor. [4Fe-4S] cluster is required as a cofactor.

Its subcellular location is the cytoplasm. The enzyme catalyses hydrogen sulfide + 3 NADP(+) + 3 H2O = sulfite + 3 NADPH + 4 H(+). It functions in the pathway sulfur metabolism; hydrogen sulfide biosynthesis; hydrogen sulfide from sulfite (NADPH route): step 1/1. Its function is as follows. Catalyzes the reduction of sulfite to sulfide, one of several activities required for the biosynthesis of L-cysteine from sulfate. The sequence is that of Sulfite reductase [NADPH] subunit beta (sir1) from Schizosaccharomyces pombe (strain 972 / ATCC 24843) (Fission yeast).